The primary structure comprises 312 residues: Methionyl-tRNA formyltransferase (312 aa).

109–112 contributes to the (6S)-5,6,7,8-tetrahydrofolate binding site; it reads SLLP.

Belongs to the Fmt family.

The enzyme catalyses L-methionyl-tRNA(fMet) + (6R)-10-formyltetrahydrofolate = N-formyl-L-methionyl-tRNA(fMet) + (6S)-5,6,7,8-tetrahydrofolate + H(+). Its function is as follows. Attaches a formyl group to the free amino group of methionyl-tRNA(fMet). The formyl group appears to play a dual role in the initiator identity of N-formylmethionyl-tRNA by promoting its recognition by IF2 and preventing the misappropriation of this tRNA by the elongation apparatus. This is Methionyl-tRNA formyltransferase from Listeria welshimeri serovar 6b (strain ATCC 35897 / DSM 20650 / CCUG 15529 / CIP 8149 / NCTC 11857 / SLCC 5334 / V8).